Reading from the N-terminus, the 633-residue chain is tRNA uridine 5-carboxymethylaminomethyl modification enzyme MnmG (633 aa).

FAD-binding positions include 13-18 (GGGHAG), valine 125, and serine 180. 273–287 (GPRYCPSIEDKITRF) serves as a coordination point for NAD(+). An FAD-binding site is contributed by glutamine 370.

The protein belongs to the MnmG family. In terms of assembly, homodimer. Heterotetramer of two MnmE and two MnmG subunits. Requires FAD as cofactor.

Its subcellular location is the cytoplasm. Functionally, NAD-binding protein involved in the addition of a carboxymethylaminomethyl (cmnm) group at the wobble position (U34) of certain tRNAs, forming tRNA-cmnm(5)s(2)U34. The sequence is that of tRNA uridine 5-carboxymethylaminomethyl modification enzyme MnmG from Alteromonas mediterranea (strain DSM 17117 / CIP 110805 / LMG 28347 / Deep ecotype).